Reading from the N-terminus, the 260-residue chain is Cytochrome c oxidase subunit 2 (260 aa).

The Mitochondrial intermembrane segment spans residues 1 to 41 (MIVREWLFFTMAPCDAAEPWQLGFQDAATPMMQGIIDLHHD). A helical membrane pass occupies residues 42-58 (IFFFLILILVFVSWILV). Topologically, residues 59-82 (RALWHFHYKKNPIPQRIVHGTTIE) are mitochondrial matrix. Residues 83 to 104 (IIRTIFPSIILMFIAIPSFALL) form a helical membrane-spanning segment. Over 105-260 (YSMDEVVVDP…NQLIPQTGEA (156 aa)) the chain is Mitochondrial intermembrane. Positions 187, 222, 224, 226, 230, and 233 each coordinate Cu cation. Mg(2+) is bound at residue Glu-224.

It belongs to the cytochrome c oxidase subunit 2 family. Component of the cytochrome c oxidase (complex IV, CIV), a multisubunit enzyme composed of a catalytic core of 3 subunits and several supernumerary subunits. The complex exists as a monomer or a dimer and forms supercomplexes (SCs) in the inner mitochondrial membrane with ubiquinol-cytochrome c oxidoreductase (cytochrome b-c1 complex, complex III, CIII). It depends on Cu cation as a cofactor.

Its subcellular location is the mitochondrion inner membrane. The enzyme catalyses 4 Fe(II)-[cytochrome c] + O2 + 8 H(+)(in) = 4 Fe(III)-[cytochrome c] + 2 H2O + 4 H(+)(out). Component of the cytochrome c oxidase, the last enzyme in the mitochondrial electron transport chain which drives oxidative phosphorylation. The respiratory chain contains 3 multisubunit complexes succinate dehydrogenase (complex II, CII), ubiquinol-cytochrome c oxidoreductase (cytochrome b-c1 complex, complex III, CIII) and cytochrome c oxidase (complex IV, CIV), that cooperate to transfer electrons derived from NADH and succinate to molecular oxygen, creating an electrochemical gradient over the inner membrane that drives transmembrane transport and the ATP synthase. Cytochrome c oxidase is the component of the respiratory chain that catalyzes the reduction of oxygen to water. Electrons originating from reduced cytochrome c in the intermembrane space (IMS) are transferred via the dinuclear copper A center (CU(A)) of subunit 2 and heme A of subunit 1 to the active site in subunit 1, a binuclear center (BNC) formed by heme A3 and copper B (CU(B)). The BNC reduces molecular oxygen to 2 water molecules using 4 electrons from cytochrome c in the IMS and 4 protons from the mitochondrial matrix. The polypeptide is Cytochrome c oxidase subunit 2 (COX2) (Beta vulgaris (Sugar beet)).